Consider the following 335-residue polypeptide: Tryptophan--tRNA ligase (335 aa).

Residues 19-21 (QPS) and 28-29 (GN) each bind ATP. The short motif at 20–29 (PSSGMLHLGN) is the 'HIGH' region element. Position 143 (Asp-143) interacts with L-tryptophan. ATP contacts are provided by residues 155-157 (GAD), Ile-192, and 201-205 (KMSKS). Positions 201–205 (KMSKS) match the 'KMSKS' region motif.

Belongs to the class-I aminoacyl-tRNA synthetase family. As to quaternary structure, homodimer.

Its subcellular location is the cytoplasm. The catalysed reaction is tRNA(Trp) + L-tryptophan + ATP = L-tryptophyl-tRNA(Trp) + AMP + diphosphate + H(+). Functionally, catalyzes the attachment of tryptophan to tRNA(Trp). The chain is Tryptophan--tRNA ligase from Tropheryma whipplei (strain TW08/27) (Whipple's bacillus).